A 360-amino-acid polypeptide reads, in one-letter code: Photosystem II protein D1 (360 aa).

A run of 3 helical transmembrane segments spans residues 30–47 (YVGWFGVLMIPCLLAAAI), 119–134 (HFLIGICGWMGRQWEL), and 143–157 (WICVAYSAPVSAAFA). His-119 is a binding site for chlorophyll a. Residue Trp-127 coordinates pheophytin a. Asp-171 and Glu-190 together coordinate [CaMn4O5] cluster. Residues 198–219 (FHMAGVAGMFGGSLFSAMHGSL) traverse the membrane as a helical segment. Residue His-199 coordinates chlorophyll a. A quinone contacts are provided by residues His-216 and 265–266 (SF). His-216 provides a ligand contact to Fe cation. His-273 lines the Fe cation pocket. Residues 275 to 289 (FLAIFPVVCVWLTSM) traverse the membrane as a helical segment. 4 residues coordinate [CaMn4O5] cluster: His-333, Glu-334, Asp-343, and Ala-345. The propeptide occupies 346–360 (AAESTSVALVAPSIG).

It belongs to the reaction center PufL/M/PsbA/D family. PSII is composed of 1 copy each of membrane proteins PsbA, PsbB, PsbC, PsbD, PsbE, PsbF, PsbH, PsbI, PsbJ, PsbK, PsbL, PsbM, PsbT, PsbX, PsbY, Psb30/Ycf12, peripheral proteins PsbO, CyanoQ (PsbQ), PsbU, PsbV and a large number of cofactors. It forms dimeric complexes. It depends on The D1/D2 heterodimer binds P680, chlorophylls that are the primary electron donor of PSII, and subsequent electron acceptors. It shares a non-heme iron and each subunit binds pheophytin, quinone, additional chlorophylls, carotenoids and lipids. D1 provides most of the ligands for the Mn4-Ca-O5 cluster of the oxygen-evolving complex (OEC). There is also a Cl(-1) ion associated with D1 and D2, which is required for oxygen evolution. The PSII complex binds additional chlorophylls, carotenoids and specific lipids. as a cofactor. Post-translationally, tyr-162 forms a radical intermediate that is referred to as redox-active TyrZ, YZ or Y-Z. In terms of processing, C-terminally processed by CtpA; processing is essential to allow assembly of the oxygen-evolving complex and thus photosynthetic growth.

The protein localises to the cellular thylakoid membrane. It catalyses the reaction 2 a plastoquinone + 4 hnu + 2 H2O = 2 a plastoquinol + O2. Functionally, photosystem II (PSII) is a light-driven water:plastoquinone oxidoreductase that uses light energy to abstract electrons from H(2)O, generating O(2) and a proton gradient subsequently used for ATP formation. It consists of a core antenna complex that captures photons, and an electron transfer chain that converts photonic excitation into a charge separation. The D1/D2 (PsbA/PsbD) reaction center heterodimer binds P680, the primary electron donor of PSII as well as several subsequent electron acceptors. The protein is Photosystem II protein D1 of Prochlorococcus marinus (strain SARG / CCMP1375 / SS120).